Here is a 177-residue protein sequence, read N- to C-terminus: Nucleoside triphosphate/diphosphate phosphatase (177 aa).

The active-site Proton donor is the R23. The Mg(2+) site is built by N87, D103, D105, D107, D120, and E123.

Belongs to the Ntdp family. Mg(2+) serves as cofactor.

The enzyme catalyses a ribonucleoside 5'-triphosphate + H2O = a ribonucleoside 5'-diphosphate + phosphate + H(+). It catalyses the reaction a ribonucleoside 5'-diphosphate + H2O = a ribonucleoside 5'-phosphate + phosphate + H(+). In terms of biological role, has nucleoside phosphatase activity towards nucleoside triphosphates and nucleoside diphosphates. The sequence is that of Nucleoside triphosphate/diphosphate phosphatase from Streptococcus thermophilus (strain ATCC BAA-491 / LMD-9).